A 238-amino-acid chain; its full sequence is 3-deoxy-manno-octulosonate cytidylyltransferase (238 aa).

Belongs to the KdsB family.

The protein resides in the cytoplasm. The catalysed reaction is 3-deoxy-alpha-D-manno-oct-2-ulosonate + CTP = CMP-3-deoxy-beta-D-manno-octulosonate + diphosphate. Its pathway is nucleotide-sugar biosynthesis; CMP-3-deoxy-D-manno-octulosonate biosynthesis; CMP-3-deoxy-D-manno-octulosonate from 3-deoxy-D-manno-octulosonate and CTP: step 1/1. It functions in the pathway bacterial outer membrane biogenesis; lipopolysaccharide biosynthesis. Functionally, activates KDO (a required 8-carbon sugar) for incorporation into bacterial lipopolysaccharide in Gram-negative bacteria. This Nitratiruptor sp. (strain SB155-2) protein is 3-deoxy-manno-octulosonate cytidylyltransferase.